We begin with the raw amino-acid sequence, 359 residues long: Histidinol-phosphate aminotransferase (359 aa).

Residue Lys217 is modified to N6-(pyridoxal phosphate)lysine.

This sequence belongs to the class-II pyridoxal-phosphate-dependent aminotransferase family. Histidinol-phosphate aminotransferase subfamily. Homodimer. It depends on pyridoxal 5'-phosphate as a cofactor.

It catalyses the reaction L-histidinol phosphate + 2-oxoglutarate = 3-(imidazol-4-yl)-2-oxopropyl phosphate + L-glutamate. Its pathway is amino-acid biosynthesis; L-histidine biosynthesis; L-histidine from 5-phospho-alpha-D-ribose 1-diphosphate: step 7/9. The chain is Histidinol-phosphate aminotransferase from Salmonella enteritidis PT4 (strain P125109).